A 549-amino-acid polypeptide reads, in one-letter code: Antagonist of mitotic exit network protein 1 (549 aa).

The span at 1–11 shows a compositional bias: polar residues; that stretch reads MKLERVSSNGS. The disordered stretch occupies residues 1–39; that stretch reads MKLERVSSNGSFKRGRDIQSLESPCTRPLKKMSPSPSFT.

The protein belongs to the AMN1 family. In terms of assembly, interacts with TEM1.

The protein localises to the cytoplasm. Its subcellular location is the nucleus. Functionally, negative regulator of the mitotic exit network (MEN), required for multiple cell cycle checkpoints. Acts in the daughter cell to inhibit the mitotic exit pathway once MEN has executed its function. Through its binding ability to TEM1, interferes with the TEM1-CDC5 association, required for CDC5 kinase activation and MEN activation. Required for daughter cell separation and chromosome stability. Involved in copper sensitivity. The polypeptide is Antagonist of mitotic exit network protein 1 (AMN1) (Saccharomyces cerevisiae (strain ATCC 204508 / S288c) (Baker's yeast)).